The primary structure comprises 377 residues: Alanine racemase (377 aa).

The Proton acceptor; specific for D-alanine role is filled by Lys-39. Lys-39 carries the N6-(pyridoxal phosphate)lysine modification. Arg-137 is a binding site for substrate. Residue Tyr-266 is the Proton acceptor; specific for L-alanine of the active site. A substrate-binding site is contributed by Met-314.

It belongs to the alanine racemase family. It depends on pyridoxal 5'-phosphate as a cofactor.

It catalyses the reaction L-alanine = D-alanine. It participates in amino-acid biosynthesis; D-alanine biosynthesis; D-alanine from L-alanine: step 1/1. Catalyzes the interconversion of L-alanine and D-alanine. May also act on other amino acids. The sequence is that of Alanine racemase (alr) from Symbiobacterium thermophilum (strain DSM 24528 / JCM 14929 / IAM 14863 / T).